Here is a 155-residue protein sequence, read N- to C-terminus: 6,7-dimethyl-8-ribityllumazine synthase (155 aa).

5-amino-6-(D-ribitylamino)uracil contacts are provided by residues Phe24, 58–60 (AFE), and 82–84 (AVI). (2S)-2-hydroxy-3-oxobutyl phosphate is bound at residue 87-88 (ST). His90 serves as the catalytic Proton donor. 5-amino-6-(D-ribitylamino)uracil is bound at residue Phe115. Position 129 (Arg129) interacts with (2S)-2-hydroxy-3-oxobutyl phosphate.

This sequence belongs to the DMRL synthase family.

It carries out the reaction (2S)-2-hydroxy-3-oxobutyl phosphate + 5-amino-6-(D-ribitylamino)uracil = 6,7-dimethyl-8-(1-D-ribityl)lumazine + phosphate + 2 H2O + H(+). Its pathway is cofactor biosynthesis; riboflavin biosynthesis; riboflavin from 2-hydroxy-3-oxobutyl phosphate and 5-amino-6-(D-ribitylamino)uracil: step 1/2. In terms of biological role, catalyzes the formation of 6,7-dimethyl-8-ribityllumazine by condensation of 5-amino-6-(D-ribitylamino)uracil with 3,4-dihydroxy-2-butanone 4-phosphate. This is the penultimate step in the biosynthesis of riboflavin. In Acetivibrio thermocellus (strain ATCC 27405 / DSM 1237 / JCM 9322 / NBRC 103400 / NCIMB 10682 / NRRL B-4536 / VPI 7372) (Clostridium thermocellum), this protein is 6,7-dimethyl-8-ribityllumazine synthase.